We begin with the raw amino-acid sequence, 139 residues long: Drosulfakinins (139 aa).

The signal sequence occupies residues 1-35; that stretch reads MGHRGMGCAHFATMAMPLWALTFYLLVVLPVPSQT. Residues 36-71 constitute a propeptide that is removed on maturation; it reads ASVEVGKEERRLQDLDPKMGSEAGNTDGLSLARFGS. At Phe-80 the chain carries Phenylalanine amide. The propeptide occupies 81-109; the sequence is GHRVPIISRPVIPIELDLLMDNEDDRTMS. Tyr-115 carries the sulfotyrosine modification. Phe-120 is subject to Phenylalanine amide. Sulfotyrosine is present on Tyr-132. Phe-137 is subject to Phenylalanine amide.

This sequence belongs to the gastrin/cholecystokinin family.

The protein localises to the secreted. Drosulfakinin-0 (DSK 0) plays diverse biological roles including regulating gut muscle contraction in adults but not in larvae. In Drosophila pseudoobscura pseudoobscura (Fruit fly), this protein is Drosulfakinins.